Consider the following 207-residue polypeptide: Dephospho-CoA kinase (207 aa).

The 198-residue stretch at 10–207 folds into the DPCK domain; that stretch reads ILGLTGGIGS…FYLTLRGGQP (198 aa). 18–23 contacts ATP; sequence GSGKSA.

The protein belongs to the CoaE family.

The protein resides in the cytoplasm. The catalysed reaction is 3'-dephospho-CoA + ATP = ADP + CoA + H(+). The protein operates within cofactor biosynthesis; coenzyme A biosynthesis; CoA from (R)-pantothenate: step 5/5. Catalyzes the phosphorylation of the 3'-hydroxyl group of dephosphocoenzyme A to form coenzyme A. The protein is Dephospho-CoA kinase of Pseudomonas putida (Arthrobacter siderocapsulatus).